A 105-amino-acid polypeptide reads, in one-letter code: Venom metalloprotease inhibitor (105 aa).

The N-terminal stretch at 1–21 (MFRFVCVLFIALVVFCTTTSA) is a signal peptide. Disulfide bonds link C26/C61, C35/C57, C39/C50, C43/C83, and C63/C77. One can recognise a TIL domain in the interval 26–83 (CNRPNEEYRCGSACQTTCATLGQRCPIMNIRCNDACYCKEGYARYGDDTGMCVSISQC).

The protein belongs to the serine protease inhibitor-like (TIL domain-containing) family. Expressed by the venom gland.

It is found in the secreted. Functionally, inhibits metalloprotease (human MMP3), trypsin, chymotrypsin, plasmin and microbial serine protease (proteinase K). Exhibits antifibrinolytic activity by binding plasmin and inhibiting it. Does not inhibit elastase, thrombin or microbial serine protease (subtilisin A). This is Venom metalloprotease inhibitor from Bombus ignitus (Bumblebee).